Here is an 834-residue protein sequence, read N- to C-terminus: Periplasmic nitrate reductase (834 aa).

A signal peptide (tat-type signal) is located at residues 1-31 (MSSELTRRNLLKAHAAGIAAATAGIALPAAA). The 57-residue stretch at 43–99 (IKWSKAPCRFCGTGCGVMVGVKEGKVVATHGDMQAEVNRGLNCIKGYFLSKIMYGKD) folds into the 4Fe-4S Mo/W bis-MGD-type domain. Positions 50, 53, 57, and 85 each coordinate [4Fe-4S] cluster. Mo-bis(molybdopterin guanine dinucleotide)-binding positions include K87, Q154, N179, C183, 216–223 (WGSNMAEM), 247–251 (STFTH), 266–268 (GTD), M377, Q381, N487, 513–514 (SD), K536, D563, and 723–732 (TGRVLEHWHS). Substrate is bound at residue W799. Residues N807 and K824 each coordinate Mo-bis(molybdopterin guanine dinucleotide).

Belongs to the prokaryotic molybdopterin-containing oxidoreductase family. NasA/NapA/NarB subfamily. Component of the periplasmic nitrate reductase NapAB complex composed of NapA and NapB. [4Fe-4S] cluster is required as a cofactor. Requires Mo-bis(molybdopterin guanine dinucleotide) as cofactor. In terms of processing, predicted to be exported by the Tat system. The position of the signal peptide cleavage has not been experimentally proven.

It is found in the periplasm. It catalyses the reaction 2 Fe(II)-[cytochrome] + nitrate + 2 H(+) = 2 Fe(III)-[cytochrome] + nitrite + H2O. Functionally, catalytic subunit of the periplasmic nitrate reductase complex NapAB. Receives electrons from NapB and catalyzes the reduction of nitrate to nitrite. The polypeptide is Periplasmic nitrate reductase (Agrobacterium fabrum (strain C58 / ATCC 33970) (Agrobacterium tumefaciens (strain C58))).